The chain runs to 575 residues: Membrane protein insertase YidC (575 aa).

Helical transmembrane passes span 6 to 26, 357 to 377, 381 to 401, 448 to 468, 490 to 510, and 526 to 546; these read VFLI…WGKD, FSIM…LHSF, WGWA…PLSA, GGCL…WVLV, PYFI…KLTP, and PLVF…YWVV.

This sequence belongs to the OXA1/ALB3/YidC family. Type 1 subfamily. In terms of assembly, interacts with the Sec translocase complex via SecD. Specifically interacts with transmembrane segments of nascent integral membrane proteins during membrane integration.

It localises to the cell inner membrane. Required for the insertion and/or proper folding and/or complex formation of integral membrane proteins into the membrane. Involved in integration of membrane proteins that insert both dependently and independently of the Sec translocase complex, as well as at least some lipoproteins. Aids folding of multispanning membrane proteins. This chain is Membrane protein insertase YidC, found in Xanthomonas campestris pv. campestris (strain B100).